The primary structure comprises 368 residues: Trans-enoyl reductase thnE (368 aa).

53-56 contributes to the NADP(+) binding site; it reads VDVK. A substrate-binding site is contributed by 140–147; the sequence is LATATAAY. NADP(+) contacts are provided by residues 179 to 182, 202 to 205, Y220, and 267 to 268; these read STAT, SPSN, and VE. 289–293 is a binding site for substrate; sequence VMTVW. 358-359 contributes to the NADP(+) binding site; the sequence is PS.

Belongs to the zinc-containing alcohol dehydrogenase family. Monomer.

It carries out the reaction malate + 6 malonyl-CoA + acetyl-CoA + 2 AH2 + 2 S-adenosyl-L-methionine + 5 NADPH + 9 H(+) = trihazone A + 2 A + 2 S-adenosyl-L-homocysteine + 6 CO2 + 5 NADP(+) + 7 CoA + 6 H2O. It functions in the pathway secondary metabolite biosynthesis. In terms of biological role, trans-enoyl reductase; part of the gene cluster that produces the tetronate natural products trihazones. The PKS-NRPS synthetase thnA with the help of the trans-enoyl reductase thnE are responsible for the synthesis of the carboxylmethyl containing trihazone A. The PKS portion of thnA synthesizes beta-keto-triene chain from one acetyl-CoA and 6 equivalents of malonyl-CoA, in collaboration with thnE, which selectively reduces the enoyl intermediate during the first and fourth iteration of the PKS. The NRPS domain selects and activates malate, of which the alpha-hydroxyl group attacks the completed polyketide acyl-S-ACP chain to form the ester product. Intramolecular Dieckmann cyclization catalyzed by the terminal reductase domain releases the product as trihazone A from the PKS-NPRS. The pathway begins with the formation of trihazone A by the hybrid PKS-NRPS synthetase thnA and the trans-enoyl reductase thnE. Trihazone A is further decarboxylated by the 2-oxoglutarate-dependent dioxygenase thnC to produce trihazone D. The function of the FAD-dependent monooxygenase thnD has still to be identified. This Trichoderma harzianum (Hypocrea lixii) protein is Trans-enoyl reductase thnE.